The chain runs to 268 residues: Tryptophan synthase alpha chain (268 aa).

Active-site proton acceptor residues include E49 and D60.

This sequence belongs to the TrpA family. In terms of assembly, tetramer of two alpha and two beta chains.

It carries out the reaction (1S,2R)-1-C-(indol-3-yl)glycerol 3-phosphate + L-serine = D-glyceraldehyde 3-phosphate + L-tryptophan + H2O. It functions in the pathway amino-acid biosynthesis; L-tryptophan biosynthesis; L-tryptophan from chorismate: step 5/5. Functionally, the alpha subunit is responsible for the aldol cleavage of indoleglycerol phosphate to indole and glyceraldehyde 3-phosphate. The chain is Tryptophan synthase alpha chain from Yersinia enterocolitica serotype O:8 / biotype 1B (strain NCTC 13174 / 8081).